The following is a 209-amino-acid chain: Chaperone protein TorD (209 aa).

Belongs to the TorD/DmsD family. TorD subfamily.

Its subcellular location is the cytoplasm. In terms of biological role, involved in the biogenesis of TorA. Acts on TorA before the insertion of the molybdenum cofactor and, as a result, probably favors a conformation of the apoenzyme that is competent for acquiring the cofactor. This Shewanella massilia protein is Chaperone protein TorD.